The primary structure comprises 274 residues: 2,3,4,5-tetrahydropyridine-2,6-dicarboxylate N-succinyltransferase (274 aa).

Substrate-binding residues include Arg103 and Asp140.

The protein belongs to the transferase hexapeptide repeat family. Homotrimer.

The protein resides in the cytoplasm. It catalyses the reaction (S)-2,3,4,5-tetrahydrodipicolinate + succinyl-CoA + H2O = (S)-2-succinylamino-6-oxoheptanedioate + CoA. The protein operates within amino-acid biosynthesis; L-lysine biosynthesis via DAP pathway; LL-2,6-diaminopimelate from (S)-tetrahydrodipicolinate (succinylase route): step 1/3. In Pasteurella multocida (strain Pm70), this protein is 2,3,4,5-tetrahydropyridine-2,6-dicarboxylate N-succinyltransferase.